Consider the following 115-residue polypeptide: Nucleoid-associated protein Pro_0020 (115 aa).

Belongs to the YbaB/EbfC family. Homodimer.

The protein resides in the cytoplasm. Its subcellular location is the nucleoid. Its function is as follows. Binds to DNA and alters its conformation. May be involved in regulation of gene expression, nucleoid organization and DNA protection. This is Nucleoid-associated protein Pro_0020 from Prochlorococcus marinus (strain SARG / CCMP1375 / SS120).